Consider the following 284-residue polypeptide: Homeobox protein SIX1 (284 aa).

A DNA-binding region (homeobox) is located at residues 124–183 (GEETSYCFKEKSRGVLREWYAHNPYPSPREKRELAEATGLTTTQVSNWFKNRRQRDRAAE). The segment at 168-284 (VSNWFKNRRQ…LTSSLVDLGS (117 aa)) is disordered. Basic and acidic residues predominate over residues 179–190 (DRAAEAKERENT). Positions 227 to 284 (DQNSVLLLQSNMGHARSSNYSLPGLTASQPSHGLQAHQHQLQDSLLGPLTSSLVDLGS) are enriched in polar residues.

Belongs to the SIX/Sine oculis homeobox family. In terms of assembly, interacts with DACH1. Interacts with EYA1. Interacts with EYA2. Interacts with CDH1. Interacts with TBX18. Interacts with CEBPA. Interacts with CEBPB. Interacts with EBF2. Post-translationally, phosphorylated during interphase; becomes hyperphosphorylated during mitosis. Hyperphosphorylation impairs binding to promoter elements. In terms of processing, ubiquitinated by the anaphase promoting complex (APC), leading to its proteasomal degradation. Expressed in phalangeal tendons and in skeletal muscle and in head and body mesenchyme.

The protein localises to the nucleus. Its subcellular location is the cytoplasm. Transcription factor that is involved in the regulation of cell proliferation, apoptosis and embryonic development. Plays an important role in the development of several organs, including kidney, muscle and inner ear. Depending on context, functions as a transcriptional repressor or activator. Lacks an activation domain, and requires interaction with EYA family members for transcription activation. Mediates nuclear translocation of EYA1 and EYA2. Binds the 5'-TCA[AG][AG]TTNC-3' motif present in the MEF3 element in the MYOG promoter and CIDEA enhancer. Regulates the expression of numerous genes, including MYC, CCNA1, CCND1 and EZR. Acts as an activator of the IGFBP5 promoter, probably coactivated by EYA2. Repression of precursor cell proliferation in myoblasts is switched to activation through recruitment of EYA3 to the SIX1-DACH1 complex. During myogenesis, seems to act together with EYA2 and DACH2. Regulates the expression of CCNA1. Promotes brown adipocyte differentiation. The protein is Homeobox protein SIX1 (Six1) of Mus musculus (Mouse).